The chain runs to 215 residues: ATP-dependent dethiobiotin synthetase BioD (215 aa).

13-18 (DIGKTV) serves as a coordination point for ATP. Mg(2+) is bound at residue Thr-17. Residue Lys-38 is part of the active site. A substrate-binding site is contributed by Thr-42. ATP-binding positions include Asp-50, 115–118 (EGAG), and 175–176 (NH). 2 residues coordinate Mg(2+): Asp-50 and Glu-115.

The protein belongs to the dethiobiotin synthetase family. In terms of assembly, homodimer. Mg(2+) serves as cofactor.

The protein localises to the cytoplasm. The enzyme catalyses (7R,8S)-7,8-diammoniononanoate + CO2 + ATP = (4R,5S)-dethiobiotin + ADP + phosphate + 3 H(+). Its pathway is cofactor biosynthesis; biotin biosynthesis; biotin from 7,8-diaminononanoate: step 1/2. Its function is as follows. Catalyzes a mechanistically unusual reaction, the ATP-dependent insertion of CO2 between the N7 and N8 nitrogen atoms of 7,8-diaminopelargonic acid (DAPA, also called 7,8-diammoniononanoate) to form a ureido ring. The sequence is that of ATP-dependent dethiobiotin synthetase BioD from Neisseria meningitidis serogroup B (strain ATCC BAA-335 / MC58).